Consider the following 101-residue polypeptide: UPF0358 protein EF_2458 (101 aa).

Belongs to the UPF0358 family.

The sequence is that of UPF0358 protein EF_2458 from Enterococcus faecalis (strain ATCC 700802 / V583).